The chain runs to 363 residues: Src kinase-associated phosphoprotein 1 (363 aa).

Residues 62–94 (PFPSDYKEEDGSDDNRSSSLGRSAQSDDASLAS) are disordered. A compositionally biased stretch (low complexity) spans 84-94 (SAQSDDASLAS). The PH domain maps to 118–221 (NVLKQGYLEK…WVDQIKIVLR (104 aa)). A disordered region spans residues 227 to 273 (VIPVDDEEEEEEEEETYDDIEGEGGPPLPQPLSGTWGRGGDTGAADE). A compositionally biased stretch (acidic residues) spans 230-248 (VDDEEEEEEEEETYDDIEG). An SH3 domain is found at 301–362 (EYANYYQGLW…PKDFLHPAYI (62 aa)).

The protein belongs to the SKAP family. Homodimer. Post-translationally, phosphorylated on tyrosines.

The protein localises to the cytoplasm. Its subcellular location is the nucleus. The protein resides in the cell membrane. Functionally, positively regulates T-cell receptor signaling. Required for optimal conjugation between T-cells and antigen-presenting cells. The chain is Src kinase-associated phosphoprotein 1 (skap1) from Takifugu rubripes (Japanese pufferfish).